A 471-amino-acid polypeptide reads, in one-letter code: ATP synthase subunit beta (471 aa).

153–160 (GGAGVGKT) is an ATP binding site.

The protein belongs to the ATPase alpha/beta chains family. As to quaternary structure, F-type ATPases have 2 components, CF(1) - the catalytic core - and CF(0) - the membrane proton channel. CF(1) has five subunits: alpha(3), beta(3), gamma(1), delta(1), epsilon(1). CF(0) has three main subunits: a(1), b(2) and c(9-12). The alpha and beta chains form an alternating ring which encloses part of the gamma chain. CF(1) is attached to CF(0) by a central stalk formed by the gamma and epsilon chains, while a peripheral stalk is formed by the delta and b chains.

It localises to the cell membrane. It carries out the reaction ATP + H2O + 4 H(+)(in) = ADP + phosphate + 5 H(+)(out). Functionally, produces ATP from ADP in the presence of a proton gradient across the membrane. The catalytic sites are hosted primarily by the beta subunits. The polypeptide is ATP synthase subunit beta (Levilactobacillus brevis (strain ATCC 367 / BCRC 12310 / CIP 105137 / JCM 1170 / LMG 11437 / NCIMB 947 / NCTC 947) (Lactobacillus brevis)).